Reading from the N-terminus, the 155-residue chain is Small ribosomal subunit protein uS9 (155 aa).

It belongs to the universal ribosomal protein uS9 family.

This chain is Small ribosomal subunit protein uS9, found in Rhizobium meliloti (strain 1021) (Ensifer meliloti).